Reading from the N-terminus, the 873-residue chain is Bifunctional uridylyltransferase/uridylyl-removing enzyme (873 aa).

The segment at 1-332 is uridylyltransferase; the sequence is MAFQSPLTFN…NGGETEPAVI (332 aa). The tract at residues 333–692 is uridylyl-removing; the sequence is INEDFQRRGR…MSKKATRGGT (360 aa). In terms of domain architecture, HD spans 451-573; the sequence is VDEHSVRLLN…VRDEERLEYL (123 aa). ACT domains are found at residues 693–773 and 800–873; these read EVFV…VKTR and LMEL…ELAP.

This sequence belongs to the GlnD family. The cofactor is Mg(2+).

The catalysed reaction is [protein-PII]-L-tyrosine + UTP = [protein-PII]-uridylyl-L-tyrosine + diphosphate. The enzyme catalyses [protein-PII]-uridylyl-L-tyrosine + H2O = [protein-PII]-L-tyrosine + UMP + H(+). Its activity is regulated as follows. Uridylyltransferase (UTase) activity is inhibited by glutamine, while glutamine activates uridylyl-removing (UR) activity. Its function is as follows. Modifies, by uridylylation and deuridylylation, the PII regulatory proteins (GlnB and homologs), in response to the nitrogen status of the cell that GlnD senses through the glutamine level. Under low glutamine levels, catalyzes the conversion of the PII proteins and UTP to PII-UMP and PPi, while under higher glutamine levels, GlnD hydrolyzes PII-UMP to PII and UMP (deuridylylation). Thus, controls uridylylation state and activity of the PII proteins, and plays an important role in the regulation of nitrogen assimilation and metabolism. The protein is Bifunctional uridylyltransferase/uridylyl-removing enzyme of Vibrio vulnificus (strain YJ016).